Here is a 785-residue protein sequence, read N- to C-terminus: Potassium transporter 5 (785 aa).

Residues 1–60 (MDGEEHQIDGDEVNNHENKLNEKKKSWGKLYRPDSFIIEAGQTPTNTGRRSLMSWRTTMS) are Cytoplasmic-facing. Ser35 is modified (phosphoserine). The helical transmembrane segment at 61-81 (LAFQSLGVVYGDIGTSPLYVY) threads the bilayer. Residues 82-97 (ASTFTDGINDKDDVVG) are Extracellular-facing. Residues 98–118 (VLSLIIYTITLVALLKYVFIV) traverse the membrane as a helical segment. Over 119 to 184 (LQANDNGEGG…EKLENSKFAK (66 aa)) the chain is Cytoplasmic. The chain crosses the membrane as a helical span at residues 185-205 (IILFLVTIMGTSMVIGDGILT). Over 206-218 (PSISVLSAVSGIK) the chain is Extracellular. A helical membrane pass occupies residues 219-239 (SLGQNTVVGVSVAILIVLFAF). At 240–247 (QRFGTDKV) the chain is on the cytoplasmic side. The helical transmembrane segment at 248-268 (GFSFAPIILVWFTFLIGIGLF) threads the bilayer. Residues 269-297 (NLFKHDITVLKALNPLYIIYYFRRTGRQG) are Extracellular-facing. The helical transmembrane segment at 298–318 (WISLGGVFLCITGTEAMFADL) threads the bilayer. At 319-327 (GHFSVRAVQ) the chain is on the cytoplasmic side. A helical transmembrane segment spans residues 328 to 348 (ISFSCVAYPALVTIYCGQAAY). At 349-367 (LTKHTYNVSNTFYDSIPDP) the chain is on the extracellular side. N-linked (GlcNAc...) asparagine glycosylation is present at Asn355. A helical transmembrane segment spans residues 368 to 388 (LYWPTFVVAVAASIIASQAMI). Residues 389–419 (SGAFSVISQSLRMGCFPRVKVVHTSAKYEGQ) lie on the Cytoplasmic side of the membrane. The helical transmembrane segment at 420–440 (VYIPEINYLLMLACIAVTLAF) threads the bilayer. The Extracellular segment spans residues 441–451 (RTTEKIGHAYG). The chain crosses the membrane as a helical span at residues 452-472 (IAVVTVMVITTLMVTLIMLVI). The Cytoplasmic portion of the chain corresponds to 473–476 (WKTN). A helical transmembrane segment spans residues 477–497 (IVWIAIFLVVFGSIEMLYLSS). Topologically, residues 498–501 (VMYK) are extracellular. A helical membrane pass occupies residues 502–522 (FTSGGYLPLTITVVLMAMMAI). Topologically, residues 523-785 (WQYVHVLKYR…LLKVGMTYEL (263 aa)) are cytoplasmic. The segment at 660 to 699 (GGEVDETDKEEEPNAETTVVPSSNYVPSSGRIGSAHSSSS) is disordered. Residues 662 to 673 (EVDETDKEEEPN) are compositionally biased toward acidic residues. Polar residues predominate over residues 674-686 (AETTVVPSSNYVP). A compositionally biased stretch (low complexity) spans 687 to 697 (SSGRIGSAHSS).

It belongs to the HAK/KUP transporter (TC 2.A.72.3) family. In terms of assembly, interacts with ILK1. Phosphorylated at the N-terminus (amino acids 1-95) by CIPK23. As to expression, predominantly expressed in the roots.

The protein localises to the cell membrane. High-affinity potassium transporter. Can also transport rubidium and cesium. Is essential with AKT1 for high-affinity potassium uptake in roots during seedling establishment and postgermination growth under low potassium conditions. Mediates potassium uptake by plant roots in response to low potassium conditions, by a calcium-, CBL-, and CIPK-dependent pathway. Positively regulated by the calcium sensors calcineurin B-like genes CBL1, CBL8, CBL9 and CBL10, and by phosphorylation by CIPK23. The sequence is that of Potassium transporter 5 (POT5) from Arabidopsis thaliana (Mouse-ear cress).